The sequence spans 484 residues: UDP-N-acetylmuramoyl-L-alanyl-D-glutamate--L-lysine ligase (484 aa).

Ser43 lines the UDP-N-acetyl-alpha-D-muramoyl-L-alanyl-D-glutamate pocket. 119-125 (GTKGKTT) lines the ATP pocket. Residues 161–162 (TT), Ser188, and Arg196 each bind UDP-N-acetyl-alpha-D-muramoyl-L-alanyl-D-glutamate. Lys230 is subject to N6-carboxylysine. The L-lysine recognition motif signature appears at 405 to 408 (DDPN).

It belongs to the MurCDEF family. MurE subfamily. Post-translationally, carboxylation is probably crucial for Mg(2+) binding and, consequently, for the gamma-phosphate positioning of ATP.

It localises to the cytoplasm. It catalyses the reaction UDP-N-acetyl-alpha-D-muramoyl-L-alanyl-D-glutamate + L-lysine + ATP = UDP-N-acetyl-alpha-D-muramoyl-L-alanyl-gamma-D-glutamyl-L-lysine + ADP + phosphate + H(+). Its pathway is cell wall biogenesis; peptidoglycan biosynthesis. Catalyzes the addition of L-lysine to the nucleotide precursor UDP-N-acetylmuramoyl-L-alanyl-D-glutamate (UMAG) in the biosynthesis of bacterial cell-wall peptidoglycan. This Streptococcus agalactiae serotype V (strain ATCC BAA-611 / 2603 V/R) protein is UDP-N-acetylmuramoyl-L-alanyl-D-glutamate--L-lysine ligase.